The sequence spans 404 residues: Probable tRNA sulfurtransferase (404 aa).

Positions 60–165 (TAVAESLKQV…EEAAYLSYET (106 aa)) constitute a THUMP domain. ATP contacts are provided by residues 183–184 (ML), 208–209 (HF), Arg265, Gly287, and Gln296.

It belongs to the ThiI family.

It is found in the cytoplasm. The enzyme catalyses [ThiI sulfur-carrier protein]-S-sulfanyl-L-cysteine + a uridine in tRNA + 2 reduced [2Fe-2S]-[ferredoxin] + ATP + H(+) = [ThiI sulfur-carrier protein]-L-cysteine + a 4-thiouridine in tRNA + 2 oxidized [2Fe-2S]-[ferredoxin] + AMP + diphosphate. The catalysed reaction is [ThiS sulfur-carrier protein]-C-terminal Gly-Gly-AMP + S-sulfanyl-L-cysteinyl-[cysteine desulfurase] + AH2 = [ThiS sulfur-carrier protein]-C-terminal-Gly-aminoethanethioate + L-cysteinyl-[cysteine desulfurase] + A + AMP + 2 H(+). It functions in the pathway cofactor biosynthesis; thiamine diphosphate biosynthesis. Functionally, catalyzes the ATP-dependent transfer of a sulfur to tRNA to produce 4-thiouridine in position 8 of tRNAs, which functions as a near-UV photosensor. Also catalyzes the transfer of sulfur to the sulfur carrier protein ThiS, forming ThiS-thiocarboxylate. This is a step in the synthesis of thiazole, in the thiamine biosynthesis pathway. The sulfur is donated as persulfide by IscS. The protein is Probable tRNA sulfurtransferase of Streptococcus pneumoniae serotype 19F (strain G54).